The following is a 213-amino-acid chain: MKVVLMGPPGAGKGTQARKISEKYGIPQLSTGDMLRAAVAAGSEVGLRAKAAMESGSLVTDEIVLGIIQDRTDEADCDQGYLLDGFPRTLAQAEGLDAMLAKRNQSIDVVIDIKVEDEPLVARITGRSSCEKCGEGYHDSFKPSAQPNVCDKCSGTLKRRADDNADTVRNRLEVYHKQTAPLIGYYDAKGLLKEVDGMQEMGKVLEDLCAILG.

10–15 (GAGKGT) contributes to the ATP binding site. Residues 30–59 (STGDMLRAAVAAGSEVGLRAKAAMESGSLV) are NMP. AMP-binding positions include Thr31, Arg36, 57–59 (SLV), 85–88 (GFPR), and Gln92. Positions 126 to 163 (GRSSCEKCGEGYHDSFKPSAQPNVCDKCSGTLKRRADD) are LID. Residue Arg127 participates in ATP binding. The Zn(2+) site is built by Cys130, Cys133, Cys150, and Cys153. Residues Arg160 and Arg171 each contribute to the AMP site. Position 199 (Gln199) interacts with ATP.

This sequence belongs to the adenylate kinase family. In terms of assembly, monomer.

It is found in the cytoplasm. The catalysed reaction is AMP + ATP = 2 ADP. It functions in the pathway purine metabolism; AMP biosynthesis via salvage pathway; AMP from ADP: step 1/1. Its function is as follows. Catalyzes the reversible transfer of the terminal phosphate group between ATP and AMP. Plays an important role in cellular energy homeostasis and in adenine nucleotide metabolism. The chain is Adenylate kinase from Magnetococcus marinus (strain ATCC BAA-1437 / JCM 17883 / MC-1).